The sequence spans 73 residues: Metallothionein (73 aa).

Cys15, Cys20, Cys26, Cys28, Cys32, Cys34, Cys39, Cys46, Cys48, Cys52, Cys54, Cys58, Cys64, Cys66, Cys70, and Cys72 together coordinate Cd(2+).

It belongs to the metallothionein superfamily. Type 2 family.

The metallothioneins are involved in the cellular sequestration of toxic metal ions. The sequence is that of Metallothionein from Dreissena polymorpha (Zebra mussel).